Reading from the N-terminus, the 848-residue chain is Adenylate cyclase (848 aa).

The segment at 1–535 is catalytic; the sequence is MYLYIETLKQ…DVSHHFPLRL (535 aa). The interval 541-848 is regulatory; it reads KALYSPCEIR…DTPLLQQYFS (308 aa). Histidine 609 carries the phosphohistidine; by CRR modification.

The protein belongs to the adenylyl cyclase class-1 family.

It is found in the cytoplasm. It catalyses the reaction ATP = 3',5'-cyclic AMP + diphosphate. In Shigella flexneri, this protein is Adenylate cyclase (cyaA).